A 622-amino-acid chain; its full sequence is Phosphoribomutase (622 aa).

Substrate-binding positions include T57, R61, 158 to 159 (SH), and K168. The active-site Phosphoserine intermediate is the S158. S158 serves as a coordination point for Mg(2+). S158 is modified (phosphoserine). Residues D325, D327, and D329 each contribute to the Mg(2+) site. Substrate is bound by residues 329–330 (DR), T404, 428–430 (EEA), and K442.

It belongs to the phosphohexose mutase family. It depends on Mg(2+) as a cofactor.

It is found in the cytoplasm. The protein localises to the nucleus. It carries out the reaction alpha-D-ribose 1-phosphate = D-ribose 5-phosphate. In terms of biological role, major phosphoribomutase that converts ribose 1-phosphate to ribose 5-phosphate. Involved in ribose salvage via the pentose phosphate pathway. The protein is Phosphoribomutase of Saccharomyces cerevisiae (strain ATCC 204508 / S288c) (Baker's yeast).